We begin with the raw amino-acid sequence, 282 residues long: Pantothenate synthetase (282 aa).

30 to 37 (MGYLHEGH) lines the ATP pocket. The Proton donor role is filled by His37. Position 61 (Gln61) interacts with (R)-pantoate. Position 61 (Gln61) interacts with beta-alanine. Position 147–150 (147–150 (GQKD)) interacts with ATP. Residue Gln153 coordinates (R)-pantoate. Residues Val176 and 184–187 (LSSR) each bind ATP.

Belongs to the pantothenate synthetase family. In terms of assembly, homodimer.

The protein localises to the cytoplasm. The enzyme catalyses (R)-pantoate + beta-alanine + ATP = (R)-pantothenate + AMP + diphosphate + H(+). The protein operates within cofactor biosynthesis; (R)-pantothenate biosynthesis; (R)-pantothenate from (R)-pantoate and beta-alanine: step 1/1. In terms of biological role, catalyzes the condensation of pantoate with beta-alanine in an ATP-dependent reaction via a pantoyl-adenylate intermediate. In Desulfitobacterium hafniense (strain DSM 10664 / DCB-2), this protein is Pantothenate synthetase.